Reading from the N-terminus, the 582-residue chain is Pescadillo homolog (582 aa).

A coiled-coil region spans residues 277–329; the sequence is LSALSASLARVVATVEEEENQLDNFPTEEEDQENMQAREKEQKEQEAQKRLFE. Residues 294–309 show a composition bias toward acidic residues; that stretch reads EENQLDNFPTEEEDQE. Residues 294–317 are disordered; sequence EENQLDNFPTEEEDQENMQAREKE. A BRCT domain is found at 323–416; sequence AQKRLFEGLK…MRLPVEDYFL (94 aa). A compositionally biased stretch (basic and acidic residues) spans 445–454; it reads ALQRGEKPVQ. Disordered regions lie at residues 445–511 and 554–582; these read ALQR…ETGS and REVNKLTAKRKAHEDASKAQKKQKKAKKQ. The segment covering 455–477 has biased composition (acidic residues); the sequence is EEDEEEEDEDEEEDDDVDDEEFT. The segment covering 478 to 490 has biased composition (basic and acidic residues); sequence EEKNLKKMEDTRA. Positions 517 to 582 form a coiled coil; that stretch reads RLEQEEKAEE…QKKQKKAKKQ (66 aa). The span at 572–582 shows a compositional bias: basic residues; it reads AQKKQKKAKKQ.

Belongs to the pescadillo family. In terms of assembly, component of the PeBoW complex, composed of bop1, pes1 and wdr12. The complex is held together by bop1, which interacts with pes1 via its N-terminal domain and with wdr12 via a high-affinity interaction between the seven-bladed beta-propeller domains of the 2 proteins. The PeBoW complex associates with the 66S pre-ribosome.

It localises to the nucleus. Its subcellular location is the nucleolus. The protein localises to the nucleoplasm. In terms of biological role, component of the PeBoW complex, which is required for maturation of 28S and 5.8S ribosomal RNAs and formation of the 60S ribosome. This Salmo salar (Atlantic salmon) protein is Pescadillo homolog (pes1).